Reading from the N-terminus, the 793-residue chain is Short transient receptor potential channel 1 (793 aa).

The disordered stretch occupies residues 1-30; that stretch reads MMAALYPSTDLSGVSSSSLPSSPSSSSPNE. Residues 1-345 lie on the Cytoplasmic side of the membrane; sequence MMAALYPSTD…FGQMSGYRRK (345 aa). Low complexity predominate over residues 15 to 28; sequence SSSSLPSSPSSSSP. ANK repeat units follow at residues 46–75, 83–109, 111–156, and 158–180; these read LNEKLFLLACDKGDYYMVKKILEENSSGDL, LGRNAVTITIENESLDILQLLLDYGCQ, ADAL…EYST, and MDVAPVILAAHRNNYEILTMLLK. The Zn(2+) site is built by histidine 189, cysteine 193, cysteine 195, and cysteine 198. Positions 346 to 379 form an intramembrane region, discontinuously helical; that stretch reads PTCKKIMTVLTVGIFWPVLSLCYLIAPKSQFGRI. The Cytoplasmic portion of the chain corresponds to 380-386; the sequence is IHTPFMK. The chain crosses the membrane as a helical span at residues 387-404; it reads FIIHGASYFTFLLLLNLY. Topologically, residues 405-422 are extracellular; it reads SLVYNEDKKNTMGPALER. The helical transmembrane segment at 423 to 439 threads the bilayer; that stretch reads IDYLLILWIIGMIWSDI. At 440–455 the chain is on the cytoplasmic side; sequence KRLWYEGLEDFLEESR. The chain crosses the membrane as a helical span at residues 456–475; that stretch reads NQLSFVMNSLYLATFALKVV. Topologically, residues 476-496 are extracellular; the sequence is AHNKFHDFADRKDWDAFHPTL. Residues 497-517 form a helical membrane-spanning segment; sequence VAEGLFAFANVLSYLRLFFMY. At 518–536 the chain is on the cytoplasmic side; that stretch reads TTSSILGPLQISMGQMLQD. The helical transmembrane segment at 537-558 threads the bilayer; the sequence is FGKFLGMFLLVLFSFTIGLTQL. Residues 559 to 623 are Extracellular-facing; the sequence is YDKGYTSKEQ…GEELQSFVGA (65 aa). The cysteines at positions 571 and 576 are disulfide-linked. A helical transmembrane segment spans residues 624–644; sequence VIVGTYNVVVVIVLTKLLVAM. Residues 645-793 are Cytoplasmic-facing; sequence LHKSFQLIAN…SKYAMFYPRN (149 aa).

Belongs to the transient receptor (TC 1.A.4) family. STrpC subfamily. TRPC1 sub-subfamily. As to quaternary structure, heterotetramer with TRPC4 and/or TRPC5. Forms a heteromeric ion channel with TRPC4, with a 1:3 TRPC1:TRPC4 stoichiometry. Unlike other TRP channel proteins, does not form a homomeric channel. Interacts with TRPC4AP. Interacts with ITPR3. Interacts with MX1 and RNF24. Interacts with FKBP4. Interacts with PLSCR1. Interacts with PKD2L2. Forms a heterotetramer with PKD2 with a 2:2 stoichiometry; has distinct channel properties separate from PKD2 or TRPC1 homomers alone. Activation of PRKCA induces phosphorylation of TRPC1 and subsequent Ca2+ entry into cells.

It is found in the cell membrane. It catalyses the reaction Ca(2+)(in) = Ca(2+)(out). The enzyme catalyses Na(+)(in) = Na(+)(out). It carries out the reaction Li(+)(in) = Li(+)(out). The catalysed reaction is Cs(+)(in) = Cs(+)(out). Its activity is regulated as follows. May be operated by a phosphatidylinositol second messenger system activated by receptor tyrosine kinases or G-protein coupled receptors. Also activated by intracellular calcium store depletion. Functionally, forms a receptor-activated non-selective calcium permeant cation channel. Forms a heteromeric ion channel with TRPC4 or TRPC5 that has reduced calcium permeability compared to the homomeric TRPC4 or TRPC5 channel. Also permeable to monovalent ions including sodium, lithium and cesium ions. The sequence is that of Short transient receptor potential channel 1 (Trpc1) from Mus musculus (Mouse).